A 263-amino-acid chain; its full sequence is Pheophorbidase (263 aa).

An AB hydrolase-1 domain is found at 13–244 (HFVFVHGASH…LEESDHSAFF (232 aa)). Serine 88 (acyl-ester intermediate) is an active-site residue. Catalysis depends on charge relay system residues aspartate 212 and histidine 240.

The protein belongs to the AB hydrolase superfamily. In terms of assembly, homodimer.

It localises to the cytoplasm. It catalyses the reaction pheophorbide a + H2O + H(+) = pyropheophorbide a + methanol + CO2. Inhibited by methanol and phenylmethylsulfonicfluoride (PMSF). Functionally, involved in chlorophyll degradation. Specific for the pheophorbides of the dihydroporphyrin and tetrahydroporphyrin types. Chlorophyllide a, pheophytin a and the nonfluorescent chlorophyll catabolite (NCC) are not used as substrates. In Raphanus sativus (Radish), this protein is Pheophorbidase (PPD).